A 109-amino-acid chain; its full sequence is Cytochrome c-550 (109 aa).

Heme c contacts are provided by cysteine 13, cysteine 16, histidine 17, and methionine 79.

In terms of processing, binds 1 heme c group covalently per subunit.

The polypeptide is Cytochrome c-550 (Nitrobacter winogradskyi (Nitrobacter agilis)).